The primary structure comprises 999 residues: Golgin subfamily A member 2 (999 aa).

Over residues Met-1 to Pro-11 the composition is skewed to pro residues. Disordered regions lie at residues Met-1–Pro-80 and Ala-244–Asp-288. The interaction with p115/USO1 stretch occupies residues Met-1–Thr-86. Dimethylated arginine is present on residues Arg-18 and Arg-30. The Nuclear localization signal signature appears at Lys-26–Lys-49. Ser-37, Ser-66, Ser-273, and Ser-438 each carry phosphoserine. Residues Leu-147–Glu-895 adopt a coiled-coil conformation. A compositionally biased stretch (polar residues) spans Thr-271–Lys-280. A disordered region spans residues Ser-444–Glu-468. Positions Glu-448–Gly-457 are enriched in pro residues. A phosphoserine mark is found at Ser-697, Ser-934, and Ser-978. The interaction with GORASP1/GRASP65 stretch occupies residues Asp-989–Val-999.

It belongs to the GOLGA2 family. In terms of assembly, homodimer, may assemble into homohexamers. Homotetramer; forms a parallel homotetramer with a flexible rod-like structure that can give rise to I- and Y-shaped conformations. Interacts with GORASP1/GRASP65. The homooligomer forms a complex with GORASP1 with a 1:1 stoichiometry. Interacts with RAB1B that has been activated by GTP-binding. Interacts with p115/USO1; interaction with p115/USO1 inhibits interaction with STX5 and/or RAB1B. Interacts with STX5. Interacts with ZFPL1. Interacts with AKAP450/AKAP9; leading to recruit AKAP450/AKAP9 to the cis-Golgi. Phosphorylated at Ser-37 by CDK1 at the onset of mitosis, inhibiting the interaction with p115/USO1 and triggering Golgi disassembly. A report however suggests that Golgi disassembly is independent of phosphorylation at Ser-37. Phosphorylated at Ser-37 in prophase as the Golgi complex starts to break down, and remains phosphorylated during further breakdown and partitioning of the Golgi fragments in metaphase and anaphase. In telophase, GM130 is dephosphorylated by PP2A as the Golgi fragments start to reassemble. In terms of processing, cleaved by caspases at the onset of apoptosis. Post-translationally, methylation by PRMT5 is required for Golgi ribbon formation. As to expression, widely expressed. Detected in brain, kidney, lung, liver, spleen, heart, skeletal muscle, thymus and pancreas. Detected in spermatocytes. Present in oocytes during all oocyte meiotic maturation (at protein level).

It is found in the golgi apparatus. It localises to the cis-Golgi network membrane. The protein resides in the endoplasmic reticulum-Golgi intermediate compartment membrane. The protein localises to the cytoplasm. Its subcellular location is the cytoskeleton. It is found in the spindle pole. Functionally, peripheral membrane component of the cis-Golgi stack that acts as a membrane skeleton that maintains the structure of the Golgi apparatus, and as a vesicle thether that facilitates vesicle fusion to the Golgi membrane. Required for normal protein transport from the endoplasmic reticulum to the Golgi apparatus and the cell membrane. Together with p115/USO1 and STX5, involved in vesicle tethering and fusion at the cis-Golgi membrane to maintain the stacked and inter-connected structure of the Golgi apparatus. Plays a central role in mitotic Golgi disassembly: phosphorylation at Ser-37 by CDK1 at the onset of mitosis inhibits the interaction with p115/USO1, preventing tethering of COPI vesicles and thereby inhibiting transport through the Golgi apparatus during mitosis. Also plays a key role in spindle pole assembly and centrosome organization. Promotes the mitotic spindle pole assembly by activating the spindle assembly factor TPX2 to nucleate microtubules around the Golgi and capture them to couple mitotic membranes to the spindle: upon phosphorylation at the onset of mitosis, GOLGA2 interacts with importin-alpha via the nuclear localization signal region, leading to recruit importin-alpha to the Golgi membranes and liberate the spindle assembly factor TPX2 from importin-alpha. TPX2 then activates AURKA kinase and stimulates local microtubule nucleation. Upon filament assembly, nascent microtubules are further captured by GOLGA2, thus linking Golgi membranes to the spindle. Regulates the meiotic spindle pole assembly, probably via the same mechanism. Also regulates the centrosome organization. Also required for the Golgi ribbon formation and glycosylation of membrane and secretory proteins. In Mus musculus (Mouse), this protein is Golgin subfamily A member 2 (Golga2).